A 109-amino-acid chain; its full sequence is ATPase inhibitor, mitochondrial (109 aa).

Residues 1–22 (MAGSSSLLRAGIRNVLLMQMRR) constitute a mitochondrion transit peptide. The N-terminal inhibitory region stretch occupies residues 27–56 (LGELGKGAGKGGGGGGSVREAGGAFGKRQA). The segment at 27 to 109 (LGELGKGAGK…KSKIKKLNDD (83 aa)) is disordered. Positions 30–43 (LGKGAGKGGGGGGS) are enriched in gly residues. Basic and acidic residues-rich tracts occupy residues 55-69 (QAAEEERYFRQKEQE) and 77-98 (HHEEEIRHHKGEIERLQKEIER). Residues 71-109 (IASLRKHHEEEIRHHKGEIERLQKEIERHKSKIKKLNDD) adopt a coiled-coil conformation. The interval 78–109 (HEEEIRHHKGEIERLQKEIERHKSKIKKLNDD) is antiparallel alpha-helical coiled coil region. Basic residues predominate over residues 99–109 (HKSKIKKLNDD).

It belongs to the ATPase inhibitor family. In terms of assembly, homodimer; represents the active form and is present at a pH value below 6.5. Homotetramer; represents the inactive form and is present at a pH value above 7.0.

It is found in the mitochondrion. Its function is as follows. Endogenous F(1)F(o)-ATPase inhibitor limiting ATP depletion when the mitochondrial membrane potential falls below a threshold and the F(1)F(o)-ATP synthase starts hydrolyzing ATP to pump protons out of the mitochondrial matrix. Required to avoid the consumption of cellular ATP when the F(1)F(o)-ATP synthase enzyme acts as an ATP hydrolase. Indirectly acts as a regulator of heme synthesis in erythroid tissues: regulates heme synthesis by modulating the mitochondrial pH and redox potential, allowing fech to efficiently catalyze the incorporation of iron into protoporphyrin IX to produce heme. This chain is ATPase inhibitor, mitochondrial, found in Xenopus tropicalis (Western clawed frog).